The sequence spans 257 residues: Thiazole synthase (257 aa).

Lys-96 serves as the catalytic Schiff-base intermediate with DXP. 1-deoxy-D-xylulose 5-phosphate contacts are provided by residues Gly-157, 184-185 (AG), and 206-207 (NT).

This sequence belongs to the ThiG family. As to quaternary structure, homotetramer. Forms heterodimers with either ThiH or ThiS.

It localises to the cytoplasm. It carries out the reaction [ThiS sulfur-carrier protein]-C-terminal-Gly-aminoethanethioate + 2-iminoacetate + 1-deoxy-D-xylulose 5-phosphate = [ThiS sulfur-carrier protein]-C-terminal Gly-Gly + 2-[(2R,5Z)-2-carboxy-4-methylthiazol-5(2H)-ylidene]ethyl phosphate + 2 H2O + H(+). It functions in the pathway cofactor biosynthesis; thiamine diphosphate biosynthesis. Functionally, catalyzes the rearrangement of 1-deoxy-D-xylulose 5-phosphate (DXP) to produce the thiazole phosphate moiety of thiamine. Sulfur is provided by the thiocarboxylate moiety of the carrier protein ThiS. In vitro, sulfur can be provided by H(2)S. This Allorhizobium ampelinum (strain ATCC BAA-846 / DSM 112012 / S4) (Agrobacterium vitis (strain S4)) protein is Thiazole synthase.